A 306-amino-acid polypeptide reads, in one-letter code: Aspartate carbamoyltransferase catalytic subunit (306 aa).

Residues arginine 49 and threonine 50 each coordinate carbamoyl phosphate. Lysine 77 contacts L-aspartate. The carbamoyl phosphate site is built by arginine 99, histidine 127, and glutamine 130. L-aspartate contacts are provided by arginine 160 and arginine 211. The carbamoyl phosphate site is built by alanine 250 and proline 251.

It belongs to the aspartate/ornithine carbamoyltransferase superfamily. ATCase family. As to quaternary structure, heterododecamer (2C3:3R2) of six catalytic PyrB chains organized as two trimers (C3), and six regulatory PyrI chains organized as three dimers (R2).

The catalysed reaction is carbamoyl phosphate + L-aspartate = N-carbamoyl-L-aspartate + phosphate + H(+). The protein operates within pyrimidine metabolism; UMP biosynthesis via de novo pathway; (S)-dihydroorotate from bicarbonate: step 2/3. In terms of biological role, catalyzes the condensation of carbamoyl phosphate and aspartate to form carbamoyl aspartate and inorganic phosphate, the committed step in the de novo pyrimidine nucleotide biosynthesis pathway. The sequence is that of Aspartate carbamoyltransferase catalytic subunit from Bacillus licheniformis (strain ATCC 14580 / DSM 13 / JCM 2505 / CCUG 7422 / NBRC 12200 / NCIMB 9375 / NCTC 10341 / NRRL NRS-1264 / Gibson 46).